The chain runs to 104 residues: DNA-directed RNA polymerase subunit omega (104 aa).

This sequence belongs to the RNA polymerase subunit omega family. The RNAP catalytic core consists of 2 alpha, 1 beta, 1 beta' and 1 omega subunit. When a sigma factor is associated with the core the holoenzyme is formed, which can initiate transcription.

It carries out the reaction RNA(n) + a ribonucleoside 5'-triphosphate = RNA(n+1) + diphosphate. Its function is as follows. Promotes RNA polymerase assembly. Latches the N- and C-terminal regions of the beta' subunit thereby facilitating its interaction with the beta and alpha subunits. The sequence is that of DNA-directed RNA polymerase subunit omega from Streptococcus thermophilus (strain CNRZ 1066).